A 1098-amino-acid chain; its full sequence is MAHAGSGGSAGRGFGGSRWGRSGSGGHEKLPVHVEDALTYLDQVKIRFGSDPATYNGFLEIMKEFKSQSIDTPGVIRRVSQLFHEHPDLIVGFNAFLPLGYRIDIPKNGKLNIQSPLSSQDNSHSHGDCGEDFKQMSYKEDRGQVPLESDSVEFNNAISYVNKIKTRFLDHPEIYRSFLEILHTYQKEQLHTKGRPFRGMSEEEVFTEVANLFRGQEDLLSEFGQFLPEAKRSLFTGNGSCEMNSGQKNEEKSLEHNKKRSRPSLLRPVSAPAKKKMKLRGTKDLSIAAVGKYGTLQEFSFFDKVRRVLKSQEVYENFLRCIALFNQELVSGSELLQLVSPFLGKFPELFAQFKSFLGVKELSFAPPMSDRSGDGISREIDYASCKRIGSSYRALPKTYQQPKCSGRTAICKEVLNDTWVSFPSWSEDSTFVSSKKTPYEEQLHRCEDERFELDVVLETNLATIRVLESVQKKLSRMAPEDQEKLRLDDCLGGTSEVIQRRAIHRIYGDKAPEVIESLKRNPATAVPVVLKRLKAKEEEWREAQQGFNKIWREQYEKAYLKSLDHQAVNFKQNDTKALRSKSLLNEIESVYDEHQEQHSEGRSAPSSEPHLIFVYEDRQILEDAAALISYYVKRQPAIQKEDQGTIRQLLHRFLPSLFFSQQCPGTSDDSADERDRDRDSAEPERRRPTDEKPPADASPEPPKVLDDVYSLFFANNNWYFFLRLHQTLCARLLKIYRQAQKQLLEHRREQEREQLLCEGRREKAADPAMELRLKQPSEVELEEYYPAFLDMVRSLLEGSIDPTQYEDTLREMFTIHAYIGFTMDKLVQNIARQLHHLVSDDVCLKVVELYLNEQQRGAAGGNLSSRCVRAARETSYQWKAERCMADENCFKVMFLQRRGQVIMTIELLDTEEAQTEDPVEVQHLARYVEQYVGSEGASSSSTEGFLLKPVFLQRNLKKFRRWQCEQVRAMRGEAKSSWKRLMGVESACDVDCRFRLGTHKMVFIVNSEDYMYRRGTLCRAKQVQPLVLLRHHRHFEEWHGRWLEDNVTVAAAGLVQDWLMGEEEEDMVPCKTLCETAHVHGLPVTRYRVQYSRRPASP.

The segment covering 1 to 25 (MAHAGSGGSAGRGFGGSRWGRSGSG) has biased composition (gly residues). The disordered stretch occupies residues 1–26 (MAHAGSGGSAGRGFGGSRWGRSGSGG). An interaction with CRY1 region spans residues 1 to 299 (MAHAGSGGSA…VGKYGTLQEF (299 aa)). 2 consecutive PAH domains span residues 30–100 (LPVH…LPLG) and 145–230 (VPLE…LPEA). Positions 52–98 (PATYNGFLEIMKEFKSQSIDTPGVIRRVSQLFHEHPDLIVGFNAFLP) are interaction with REST. The span at 238 to 247 (NGSCEMNSGQ) shows a compositional bias: polar residues. The disordered stretch occupies residues 238 to 274 (NGSCEMNSGQKNEEKSLEHNKKRSRPSLLRPVSAPAK). The interval 275-499 (KKMKLRGTKD…CLGGTSEVIQ (225 aa)) is interaction with NCOR1. The PAH 3 domain maps to 283–360 (KDLSIAAVGK…AQFKSFLGVK (78 aa)). Residues 383-550 (ASCKRIGSSY…REAQQGFNKI (168 aa)) are interaction with SUDS3 and HDAC1. The segment at 661-702 (QQCPGTSDDSADERDRDRDSAEPERRRPTDEKPPADASPEPP) is disordered. 2 positions are modified to phosphoserine: Ser-667 and Ser-670. Over residues 673–694 (ERDRDRDSAEPERRRPTDEKPP) the composition is skewed to basic and acidic residues.

Component of the SIN3B complex, which includes SIN3B, HDAC2 or HDAC1, PHF12 and MORF4L1. Interacts with FOXK1/MNF, MXI, MAD, NCOR1 and SAP30. Interaction with SUDS3 enhances the interaction with HDAC1 to form a complex. Interacts with CRY1, HCFC1, MAD3, MAD4, MAEL, REST, RNF220 and SETDB1. Interacts with C6orf89. Interacts with MYT1L. Ubiquitinated by RNF220 that leads to proteasomal degradation.

It is found in the nucleus. Acts as a transcriptional repressor. Interacts with MXI1 to repress MYC responsive genes and antagonize MYC oncogenic activities. Interacts with MAD-MAX heterodimers by binding to MAD. The heterodimer then represses transcription by tethering SIN3B to DNA. Also forms a complex with FOXK1 which represses transcription. With FOXK1, regulates cell cycle progression probably by repressing cell cycle inhibitor genes expression. As part of the SIN3B complex represses transcription and counteracts the histone acetyltransferase activity of EP300 through the recognition H3K27ac marks by PHF12 and the activity of the histone deacetylase HDAC2. SIN3B complex is recruited downstream of the constitutively active genes transcriptional start sites through interaction with histones and mitigates histone acetylation and RNA polymerase II progression within transcribed regions contributing to the regulation of transcription. The sequence is that of Paired amphipathic helix protein Sin3b (Sin3b) from Mus musculus (Mouse).